The chain runs to 204 residues: Threonylcarbamoyl-AMP synthase (204 aa).

The region spanning 10 to 204 (ADELDLVANY…KDLLAGHILR (195 aa)) is the YrdC-like domain.

This sequence belongs to the SUA5 family. TsaC subfamily.

The protein localises to the cytoplasm. It catalyses the reaction L-threonine + hydrogencarbonate + ATP = L-threonylcarbamoyladenylate + diphosphate + H2O. Required for the formation of a threonylcarbamoyl group on adenosine at position 37 (t(6)A37) in tRNAs that read codons beginning with adenine. Catalyzes the conversion of L-threonine, HCO(3)(-)/CO(2) and ATP to give threonylcarbamoyl-AMP (TC-AMP) as the acyladenylate intermediate, with the release of diphosphate. The sequence is that of Threonylcarbamoyl-AMP synthase from Moraxella catarrhalis (strain BBH18).